Consider the following 484-residue polypeptide: Transcription factor cghD (484 aa).

Positions 21-54 form a DNA-binding region, zn(2)-C6 fungal-type; sequence CDRCRLQKLKCTVQSMESDGRMVCERCVRAKVPC. 4 disordered regions span residues 59 to 117, 136 to 174, 202 to 242, and 386 to 406; these read RRRA…PTLA, TTAP…SGSS, PAST…FSTT, and HMHS…ELPS. A compositionally biased stretch (basic and acidic residues) spans 64-76; it reads RPSDTKKQGDSST. The span at 77-107 shows a compositional bias: low complexity; sequence RRSTAPRTTNPEPTVLTPPLSTTSSTSEQTL. Low complexity predominate over residues 202-213; the sequence is PASTSTSTGSPT.

It localises to the nucleus. Its function is as follows. Transcription factor that regulates the expression of the gene cluster that mediates the biosynthesis of the tetramic acid Sch210972, a potential anti-HIV fungal natural product that contains a decalin core. The protein is Transcription factor cghD of Chaetomium globosum (strain ATCC 6205 / CBS 148.51 / DSM 1962 / NBRC 6347 / NRRL 1970) (Soil fungus).